Consider the following 789-residue polypeptide: Probable phosphoketolase 1 (789 aa).

This sequence belongs to the XFP family. Thiamine diphosphate serves as cofactor.

This Rhizobium meliloti (strain 1021) (Ensifer meliloti) protein is Probable phosphoketolase 1.